The following is a 313-amino-acid chain: Aspartoacylase (313 aa).

Residues His-21 and Glu-24 each coordinate Zn(2+). 3 residues coordinate N-acetyl-L-aspartate: Arg-63, Asn-70, and Arg-71. His-116 lines the Zn(2+) pocket. Positions 164 and 168 each coordinate N-acetyl-L-aspartate. Glu-178 serves as the catalytic Proton donor/acceptor. Position 288 (Tyr-288) interacts with N-acetyl-L-aspartate.

It belongs to the AspA/AstE family. Aspartoacylase subfamily. Homodimer. The cofactor is Zn(2+).

The protein resides in the cytoplasm. It localises to the nucleus. It catalyses the reaction an N-acyl-L-aspartate + H2O = a carboxylate + L-aspartate. The enzyme catalyses N-acetyl-L-aspartate + H2O = L-aspartate + acetate. In terms of biological role, catalyzes the deacetylation of N-acetylaspartic acid (NAA) to produce acetate and L-aspartate. NAA occurs in high concentration in brain and its hydrolysis NAA plays a significant part in the maintenance of intact white matter. In other tissues it acts as a scavenger of NAA from body fluids. This Pongo abelii (Sumatran orangutan) protein is Aspartoacylase.